Reading from the N-terminus, the 313-residue chain is Zinc transporter ZitB (313 aa).

Over 1 to 20 (MAHSHSHTSSHLPEDNNARR) the chain is Cytoplasmic. The chain crosses the membrane as a helical span at residues 21–41 (LLYAFGVTAGFMLVEVVGGFL). The Periplasmic portion of the chain corresponds to 42–47 (SGSLAL). Residues 48 to 68 (LADAGHMLTDTAALLFALLAV) form a helical membrane-spanning segment. The Cytoplasmic segment spans residues 69-89 (QFSRRPPTIRHTFGWLRLTTL). A helical membrane pass occupies residues 90 to 110 (AAFVNAIALVVITILIVWEAI). Topologically, residues 111 to 121 (ERFRTPRPVEG) are periplasmic. A helical membrane pass occupies residues 122–142 (GMMMAIAVAGLLANILSFWLL). At 143–159 (HHGSEEKNLNVRAAALH) the chain is on the cytoplasmic side. The chain crosses the membrane as a helical span at residues 160–180 (VLGDLLGSVGAIIAALIIIWT). Residue Gly181 is a topological domain, periplasmic. Residues 182–202 (WTPADPILSILVSLLVLRSAW) traverse the membrane as a helical segment. Residues 203-313 (RLLKDSVNEL…GVSGHSHHHH (111 aa)) are Cytoplasmic-facing.

It belongs to the cation diffusion facilitator (CDF) transporter (TC 2.A.4) family. SLC30A subfamily.

It localises to the cell inner membrane. Involved in zinc efflux across the cytoplasmic membrane, thus reducing zinc accumulation in the cytoplasm and rendering bacteria more resistant to zinc. It may contribute to zinc homeostasis at low concentrations of zinc, whereas ZntA is required for growth at more toxic concentrations. In Escherichia coli (strain K12), this protein is Zinc transporter ZitB (zitB).